Here is a 473-residue protein sequence, read N- to C-terminus: MTKNIGKITQIISAVVDVKFTNNSKLPAILNALECYSDNQRIVLEVVQHIGDDTVRCIAMDSTEGLVRGLEVVDTGSPICIPVGTATLGRIMNVVGESIDGKGEIKSSNVSSIYKPAPSFTNQSSERTILVTGIKVVDLLAPYTKGGKIGLFGGAGVGKTVLIMELINNVAKAHGGYTVFAGVGERTREGNDLYHEMIDSGVINLEEPEKSKVALVYGQMDEPPGARARVALSGLTIAESFRDMNEGQDVLFFVDNIFRFTQAGSEVSALLGRVPSAVGYQPTLATDMGALQERITSTKHGSITSVQAIYVPADDLTDPAPATSFAHLDATTVLSRQIAELGIYPAVDPLDSNSQVLDPMIVGEEHYSVARQVQQVLQTYKSLQDIIAILGMDELSEEDKLTVSRARKIQRFLSQPFHVAEVFTGVEGKFVDLADTIEGFKGLVEGQYDGLPEAAFYMVGTIDEAIEKARTLK.

Residue Gly153 to Thr160 coordinates ATP.

Belongs to the ATPase alpha/beta chains family. F-type ATPases have 2 components, CF(1) - the catalytic core - and CF(0) - the membrane proton channel. CF(1) has five subunits: alpha(3), beta(3), gamma(1), delta(1), epsilon(1). CF(0) has three main subunits: a(1), b(2) and c(9-12). The alpha and beta chains form an alternating ring which encloses part of the gamma chain. CF(1) is attached to CF(0) by a central stalk formed by the gamma and epsilon chains, while a peripheral stalk is formed by the delta and b chains.

Its subcellular location is the cell inner membrane. It carries out the reaction ATP + H2O + 4 H(+)(in) = ADP + phosphate + 5 H(+)(out). In terms of biological role, produces ATP from ADP in the presence of a proton gradient across the membrane. The catalytic sites are hosted primarily by the beta subunits. This chain is ATP synthase subunit beta, found in Rickettsia canadensis (strain McKiel).